Consider the following 406-residue polypeptide: Haptoglobin (406 aa).

An N-terminal signal peptide occupies residues 1-18; sequence MSALGAVIALLLWGQLFA. 2 consecutive Sushi domains span residues 31-88 and 90-147; these read DGCP…ECEA. Cystine bridges form between Cys52–Cys86, Cys111–Cys145, Cys149–Cys266, Cys309–Cys340, and Cys351–Cys381. One can recognise a Peptidase S1 domain in the interval 162–404; sequence ILGGHLDAKG…IQDWVQKTIA (243 aa). A glycan (N-linked (GlcNAc...) (complex) asparagine) is linked at Asn184. Asn207 and Asn211 each carry an N-linked (GlcNAc...) asparagine glycan. N-linked (GlcNAc...) (complex) asparagine glycosylation is present at Asn241. An interaction with CD163 region spans residues 318–323; sequence VPEKKT.

The protein belongs to the peptidase S1 family. Tetramer of two alpha and two beta chains; disulfide-linked. The hemoglobin/haptoglobin complex is composed of a haptoglobin dimer bound to two hemoglobin alpha-beta dimers. Interacts with CD163. Interacts with ERGIC3. Expressed by the liver and secreted in plasma.

The protein resides in the secreted. Functionally, as a result of hemolysis, hemoglobin is found to accumulate in the kidney and is secreted in the urine. Haptoglobin captures, and combines with free plasma hemoglobin to allow hepatic recycling of heme iron and to prevent kidney damage. Haptoglobin also acts as an antioxidant, has antibacterial activity, and plays a role in modulating many aspects of the acute phase response. Hemoglobin/haptoglobin complexes are rapidly cleared by the macrophage CD163 scavenger receptor expressed on the surface of liver Kupfer cells through an endocytic lysosomal degradation pathway. The uncleaved form of allele alpha-2 (2-2), known as zonulin, plays a role in intestinal permeability, allowing intercellular tight junction disassembly, and controlling the equilibrium between tolerance and immunity to non-self antigens. This is Haptoglobin (HP) from Homo sapiens (Human).